The following is a 363-amino-acid chain: Chalcone synthase B (363 aa).

The active site involves C170.

It belongs to the thiolase-like superfamily. Chalcone/stilbene synthases family.

The catalysed reaction is (E)-4-coumaroyl-CoA + 3 malonyl-CoA + 3 H(+) = 2',4,4',6'-tetrahydroxychalcone + 3 CO2 + 4 CoA. Its pathway is secondary metabolite biosynthesis; flavonoid biosynthesis. Its function is as follows. The primary product of this enzyme is 4,2',4',6'-tetrahydroxychalcone (also termed naringenin-chalcone or chalcone) which can under specific conditions spontaneously isomerize into naringenin. In Ipomoea nil (Japanese morning glory), this protein is Chalcone synthase B (CHSB).